A 153-amino-acid polypeptide reads, in one-letter code: Transcriptional repressor NrdR (153 aa).

Residues 3–34 (CPFCGYEDSKVVDTRPTNEGKTIKRRRECLKC) fold into a zinc finger. Residues 49–139 (ILVIKKDNRR…VYRQFKDINT (91 aa)) enclose the ATP-cone domain.

Belongs to the NrdR family. Requires Zn(2+) as cofactor.

Negatively regulates transcription of bacterial ribonucleotide reductase nrd genes and operons by binding to NrdR-boxes. The protein is Transcriptional repressor NrdR of Caldicellulosiruptor bescii (strain ATCC BAA-1888 / DSM 6725 / KCTC 15123 / Z-1320) (Anaerocellum thermophilum).